The sequence spans 165 residues: 3-isopropylmalate dehydratase small subunit (165 aa).

This sequence belongs to the LeuD family. LeuD type 2 subfamily. In terms of assembly, heterodimer of LeuC and LeuD.

It catalyses the reaction (2R,3S)-3-isopropylmalate = (2S)-2-isopropylmalate. It functions in the pathway amino-acid biosynthesis; L-leucine biosynthesis; L-leucine from 3-methyl-2-oxobutanoate: step 2/4. Functionally, catalyzes the isomerization between 2-isopropylmalate and 3-isopropylmalate, via the formation of 2-isopropylmaleate. The sequence is that of 3-isopropylmalate dehydratase small subunit from Desulfovibrio desulfuricans (strain ATCC 27774 / DSM 6949 / MB).